We begin with the raw amino-acid sequence, 146 residues long: Hemoglobin subunit beta (146 aa).

Valine 1 carries the N-acetylvaline modification. The region spanning 2-146 (HLTAEEKNAI…VANALAHKYH (145 aa)) is the Globin domain. The residue at position 12 (threonine 12) is a Phosphothreonine. An N6-acetyllysine modification is found at lysine 59. Histidine 63 is a binding site for heme b. Residue lysine 82 is modified to N6-acetyllysine. Position 92 (histidine 92) interacts with heme b. Residue cysteine 93 is modified to S-nitrosocysteine. Residue lysine 144 is modified to N6-acetyllysine.

The protein belongs to the globin family. Heterotetramer of two alpha chains and two beta chains. In terms of tissue distribution, red blood cells.

Its function is as follows. Involved in oxygen transport from the lung to the various peripheral tissues. The chain is Hemoglobin subunit beta (HBB) from Osphranter rufus (Red kangaroo).